A 213-amino-acid chain; its full sequence is MLSPYGKGTLVTSLLISLLLAGAGLIFPGIVQAVFSTASVGLALFALFFFRDPSRTVPSEPNAVLAPADGRVLLIKKIAHPFTGQNSTLVSIFMSPFNVHVNRIPLQGRIAHLSYSPGKHLMAFNHASMADNERMEIGLENSQCRIIFSQVAGFIARRIVCSLRVGDNVAAGSRFGMITFGSRLDIVVPESTRLTVSKGCKTVAGETVIGYVK.

Serine 182 (schiff-base intermediate with substrate; via pyruvic acid) is an active-site residue. At serine 182 the chain carries Pyruvic acid (Ser); by autocatalysis.

This sequence belongs to the phosphatidylserine decarboxylase family. PSD-A subfamily. In terms of assembly, heterodimer of a large membrane-associated beta subunit and a small pyruvoyl-containing alpha subunit. It depends on pyruvate as a cofactor. Post-translationally, is synthesized initially as an inactive proenzyme. Formation of the active enzyme involves a self-maturation process in which the active site pyruvoyl group is generated from an internal serine residue via an autocatalytic post-translational modification. Two non-identical subunits are generated from the proenzyme in this reaction, and the pyruvate is formed at the N-terminus of the alpha chain, which is derived from the carboxyl end of the proenzyme. The post-translation cleavage follows an unusual pathway, termed non-hydrolytic serinolysis, in which the side chain hydroxyl group of the serine supplies its oxygen atom to form the C-terminus of the beta chain, while the remainder of the serine residue undergoes an oxidative deamination to produce ammonia and the pyruvoyl prosthetic group on the alpha chain.

It is found in the cell membrane. It catalyses the reaction a 1,2-diacyl-sn-glycero-3-phospho-L-serine + H(+) = a 1,2-diacyl-sn-glycero-3-phosphoethanolamine + CO2. The protein operates within phospholipid metabolism; phosphatidylethanolamine biosynthesis; phosphatidylethanolamine from CDP-diacylglycerol: step 2/2. Functionally, catalyzes the formation of phosphatidylethanolamine (PtdEtn) from phosphatidylserine (PtdSer). This is Phosphatidylserine decarboxylase proenzyme from Chlorobium phaeobacteroides (strain BS1).